Consider the following 561-residue polypeptide: Lysine--tRNA ligase (561 aa).

Mg(2+)-binding residues include Glu-409 and Glu-416.

The protein belongs to the class-II aminoacyl-tRNA synthetase family. In terms of assembly, homodimer. Mg(2+) serves as cofactor.

It is found in the cytoplasm. It catalyses the reaction tRNA(Lys) + L-lysine + ATP = L-lysyl-tRNA(Lys) + AMP + diphosphate. The sequence is that of Lysine--tRNA ligase from Trichormus variabilis (strain ATCC 29413 / PCC 7937) (Anabaena variabilis).